We begin with the raw amino-acid sequence, 156 residues long: MKTISLVYISLSGNTESFVTRLKDYLLSQYKRIEVQKIHIKDLVKEGKNFYEMDHPYVAFLPTYLEGGNGVDNGDVEILTTPVGDFIAYGNNASKCFGVVGSGNRNFNNQYCLTAKQYSQRFGFPVLADFEMRGMLEDIKHVAAIIADLYELEKEN.

This Streptococcus pneumoniae (strain ATCC BAA-255 / R6) protein is Putative NrdI-like protein.